Reading from the N-terminus, the 67-residue chain is Gene 51 protein (67 aa).

The polypeptide is Gene 51 protein (51) (Mycobacterium (Mycobacteriophage L5)).